We begin with the raw amino-acid sequence, 522 residues long: E3 ubiquitin-protein ligase DMA2 (522 aa).

Disordered regions lie at residues methionine 1 to serine 56 and glutamine 69 to serine 92. Low complexity predominate over residues alanine 14 to serine 35. A compositionally biased stretch (polar residues) spans glycine 36–asparagine 49. A Phosphoserine modification is found at serine 206. Residues lysine 211, lysine 256, lysine 258, lysine 288, lysine 310, lysine 333, lysine 343, lysine 346, lysine 366, lysine 406, lysine 412, and lysine 423 each participate in a glycyl lysine isopeptide (Lys-Gly) (interchain with G-Cter in ubiquitin) cross-link. One can recognise an FHA domain in the interval leucine 295–leucine 358. The RING-type; atypical zinc finger occupies cysteine 433–arginine 477.

This sequence belongs to the DMA1 family. Post-translationally, UBC4-dependent autoubiquitination occurs at Lys-211, Lys-258, Lys-288, Lys-310, Lys-333, Lys-343, Lys-346, Lys-366, Lys-406, Lys-412 and Lys-423. UBC13/MMS2-dependent autoubiquitination occurs at Lys-258, Lys-310, Lys-346 and Lys-366. Lys-211, Lys-256, Lys-288, Lys-310, Lys-343, Lys-258, Lys-366 and Lys-412 are also ubiquitinated in trans by DMA1 E3 ligase in association with UBC4.

It localises to the cytoplasm. The enzyme catalyses S-ubiquitinyl-[E2 ubiquitin-conjugating enzyme]-L-cysteine + [acceptor protein]-L-lysine = [E2 ubiquitin-conjugating enzyme]-L-cysteine + N(6)-ubiquitinyl-[acceptor protein]-L-lysine.. E3 ubiquitin-protein ligase which functions in cell cycle retarding in conjunction with the UBC4 and UBC13/MMS2 complex, 2 E2 ubiquitin conjugating enzymes. Involved in nutritional control of the cell cycle. Required for proper spindle positioning, likely regulating septin ring deposition at the bud neck. This chain is E3 ubiquitin-protein ligase DMA2 (DMA2), found in Saccharomyces cerevisiae (strain YJM789) (Baker's yeast).